Consider the following 264-residue polypeptide: Acyl-[acyl-carrier-protein]--UDP-N-acetylglucosamine O-acyltransferase (264 aa).

It belongs to the transferase hexapeptide repeat family. LpxA subfamily. As to quaternary structure, homotrimer.

The protein resides in the cytoplasm. The enzyme catalyses a (3R)-hydroxyacyl-[ACP] + UDP-N-acetyl-alpha-D-glucosamine = a UDP-3-O-[(3R)-3-hydroxyacyl]-N-acetyl-alpha-D-glucosamine + holo-[ACP]. The protein operates within glycolipid biosynthesis; lipid IV(A) biosynthesis; lipid IV(A) from (3R)-3-hydroxytetradecanoyl-[acyl-carrier-protein] and UDP-N-acetyl-alpha-D-glucosamine: step 1/6. Functionally, involved in the biosynthesis of lipid A, a phosphorylated glycolipid that anchors the lipopolysaccharide to the outer membrane of the cell. The chain is Acyl-[acyl-carrier-protein]--UDP-N-acetylglucosamine O-acyltransferase from Rickettsia felis (strain ATCC VR-1525 / URRWXCal2) (Rickettsia azadi).